Here is a 238-residue protein sequence, read N- to C-terminus: Uridylate kinase (238 aa).

ATP is bound at residue 12-15 (KLSG). UMP is bound at residue glycine 54. ATP-binding residues include glycine 55 and arginine 59. UMP is bound by residues aspartate 74 and 135 to 142 (TGNPFFTT). Threonine 162, asparagine 163, tyrosine 168, and aspartate 171 together coordinate ATP.

Belongs to the UMP kinase family. Homohexamer.

It localises to the cytoplasm. The catalysed reaction is UMP + ATP = UDP + ADP. It participates in pyrimidine metabolism; CTP biosynthesis via de novo pathway; UDP from UMP (UMPK route): step 1/1. Inhibited by UTP. Functionally, catalyzes the reversible phosphorylation of UMP to UDP. This is Uridylate kinase from Rhodopseudomonas palustris (strain BisA53).